The chain runs to 482 residues: Dihydrolipoyllysine-residue acetyltransferase component of pyruvate dehydrogenase complex, mitochondrial (482 aa).

The N-terminal 28 residues, 1-28 (MSAFVRVVPRISRSSVLTRSLRLQLRCY), are a transit peptide targeting the mitochondrion. Residues 34–110 (HTIIGMPALS…PVNKPIAVYV (77 aa)) enclose the Lipoyl-binding domain. The residue at position 75 (Lys75) is an N6-lipoyllysine. Positions 122 to 170 (FKLEDSGSDSKTSTKAQPAEPQAEKKQEAPAEETKTSAPEAKKSDVAAP) are disordered. Over residues 143–166 (QAEKKQEAPAEETKTSAPEAKKSD) the composition is skewed to basic and acidic residues. The Peripheral subunit-binding (PSBD) domain occupies 175 to 212 (FASPLAKTIALEKGISLKDVHGTGPRGRITKADIESYL). Positions 214–251 (KSSKQSSQTSGAAAATPAAATSSTTAGSAPSPSSTASY) are disordered. Positions 217 to 250 (KQSSQTSGAAAATPAAATSSTTAGSAPSPSSTAS) are enriched in low complexity. Residues His455 and Asp459 contribute to the active site.

It belongs to the 2-oxoacid dehydrogenase family. Eukaryotic pyruvate dehydrogenase (PDH) complexes are organized as a core consisting of the oligomeric dihydrolipoamide acetyl-transferase (E2), around which are arranged multiple copies of pyruvate dehydrogenase (E1), dihydrolipoamide dehydrogenase (E3) and protein X (E3BP) bound by non-covalent bonds. (R)-lipoate is required as a cofactor.

Its subcellular location is the mitochondrion matrix. The catalysed reaction is N(6)-[(R)-dihydrolipoyl]-L-lysyl-[protein] + acetyl-CoA = N(6)-[(R)-S(8)-acetyldihydrolipoyl]-L-lysyl-[protein] + CoA. Its function is as follows. The pyruvate dehydrogenase complex catalyzes the overall conversion of pyruvate to acetyl-CoA and CO(2). The chain is Dihydrolipoyllysine-residue acetyltransferase component of pyruvate dehydrogenase complex, mitochondrial (LAT1) from Saccharomyces cerevisiae (strain ATCC 204508 / S288c) (Baker's yeast).